The primary structure comprises 634 residues: Growth hormone receptor (634 aa).

A signal peptide spans 1–18 (MDLWQLLLTLAVAGSSDA). Over 19-260 (FSGSEATPAF…NPSACEEDFQ (242 aa)) the chain is Extracellular. Residue Asn46 is glycosylated (N-linked (GlcNAc...) asparagine). Cys56 and Cys66 are disulfide-bonded. Residue Asn73 is glycosylated (N-linked (GlcNAc...) asparagine). The cysteines at positions 97 and 108 are disulfide-linked. Asn111 carries N-linked (GlcNAc...) asparagine glycosylation. A disulfide bridge links Cys122 with Cys136. Residues 147 to 250 (PPVGLNWTLL…EVLLITFPQM (104 aa)) form the Fibronectin type-III domain. 3 N-linked (GlcNAc...) asparagine glycosylation sites follow: Asn152, Asn157, and Asn196. Positions 236 to 240 (YGKFS) match the WSXWS motif motif. The chain crosses the membrane as a helical span at residues 261–284 (FPWFLIIIFGILGLAVTLYLLIFS). Topologically, residues 285–634 (KQQRIKMLIL…STDQLNKIMP (350 aa)) are cytoplasmic. Positions 290–375 (KMLILPPVPV…HEKSLNIFGA (86 aa)) are required for JAK2 binding. The Box 1 motif motif lies at 293–301 (ILPPVPVPK). The short motif at 336–345 (DSWVEFIELD) is the UbE motif element. Ser337 bears the Phosphoserine mark.

This sequence belongs to the type I cytokine receptor family. Type 1 subfamily. In terms of assembly, on growth hormone (GH) binding, forms homodimers and binds JAK2 via a box 1-containing domain. The soluble form (GHBP) is produced by phorbol ester-promoted proteolytic cleavage at the cell surface (shedding) by ADAM17/TACE. Shedding is inhibited by growth hormone (GH) binding to the receptor probably due to a conformational change in GHR rendering the receptor inaccessible to ADAM17. In terms of processing, on GH binding, phosphorylated on tyrosine residues in the cytoplasmic domain by JAK2. Post-translationally, ubiquitinated by the ECS(SOCS2) complex following ligand-binding and phosphorylation by JAK2, leading to its degradation by the proteasome. Regulation by the ECS(SOCS2) complex acts as a negative feedback loop of growth hormone receptor signaling. Ubiquitination is not sufficient for GHR internalization.

The protein localises to the cell membrane. The protein resides in the secreted. Receptor for pituitary gland growth hormone (GH1) involved in regulating postnatal body growth. On ligand binding, couples to the JAK2/STAT5 pathway. In terms of biological role, the soluble form (GHBP) acts as a reservoir of growth hormone in plasma and may be a modulator/inhibitor of GH signaling. This Bos taurus (Bovine) protein is Growth hormone receptor (GHR).